Here is a 307-residue protein sequence, read N- to C-terminus: Homoserine kinase (307 aa).

ATP is bound at residue 91–101 (PLARGLGSSAA).

Belongs to the GHMP kinase family. Homoserine kinase subfamily.

It is found in the cytoplasm. It catalyses the reaction L-homoserine + ATP = O-phospho-L-homoserine + ADP + H(+). The protein operates within amino-acid biosynthesis; L-threonine biosynthesis; L-threonine from L-aspartate: step 4/5. Its function is as follows. Catalyzes the ATP-dependent phosphorylation of L-homoserine to L-homoserine phosphate. The sequence is that of Homoserine kinase from Deinococcus radiodurans (strain ATCC 13939 / DSM 20539 / JCM 16871 / CCUG 27074 / LMG 4051 / NBRC 15346 / NCIMB 9279 / VKM B-1422 / R1).